Reading from the N-terminus, the 263-residue chain is Endonuclease 8 (263 aa).

Catalysis depends on proline 2, which acts as the Schiff-base intermediate with DNA. The active-site Proton donor is glutamate 3. Lysine 53 serves as the catalytic Proton donor; for beta-elimination activity. Positions 70, 125, and 169 each coordinate DNA. The segment at 229–263 (KVFHRDGEVCERCGGIIEKTTLSSRPFYWCPHCQK) adopts an FPG-type zinc-finger fold. Residue arginine 253 is the Proton donor; for delta-elimination activity of the active site.

It belongs to the FPG family. It depends on Zn(2+) as a cofactor.

The catalysed reaction is 2'-deoxyribonucleotide-(2'-deoxyribose 5'-phosphate)-2'-deoxyribonucleotide-DNA = a 3'-end 2'-deoxyribonucleotide-(2,3-dehydro-2,3-deoxyribose 5'-phosphate)-DNA + a 5'-end 5'-phospho-2'-deoxyribonucleoside-DNA + H(+). Functionally, involved in base excision repair of DNA damaged by oxidation or by mutagenic agents. Acts as a DNA glycosylase that recognizes and removes damaged bases. Has a preference for oxidized pyrimidines, such as thymine glycol, 5,6-dihydrouracil and 5,6-dihydrothymine. Has AP (apurinic/apyrimidinic) lyase activity and introduces nicks in the DNA strand. Cleaves the DNA backbone by beta-delta elimination to generate a single-strand break at the site of the removed base with both 3'- and 5'-phosphates. This chain is Endonuclease 8, found in Salmonella newport (strain SL254).